Here is a 382-residue protein sequence, read N- to C-terminus: D-galactonate dehydratase (382 aa).

Asp-183 contacts Mg(2+). His-185 acts as the Proton donor in catalysis. 2 residues coordinate Mg(2+): Glu-209 and Glu-235. Catalysis depends on His-285, which acts as the Proton acceptor.

It belongs to the mandelate racemase/muconate lactonizing enzyme family. GalD subfamily. It depends on Mg(2+) as a cofactor.

The catalysed reaction is D-galactonate = 2-dehydro-3-deoxy-D-galactonate + H2O. Its pathway is carbohydrate acid metabolism; D-galactonate degradation; D-glyceraldehyde 3-phosphate and pyruvate from D-galactonate: step 1/3. Its function is as follows. Catalyzes the dehydration of D-galactonate to 2-keto-3-deoxy-D-galactonate. The sequence is that of D-galactonate dehydratase from Escherichia coli (strain 55989 / EAEC).